The following is a 141-amino-acid chain: Large ribosomal subunit protein uL11 (141 aa).

The protein belongs to the universal ribosomal protein uL11 family. Part of the ribosomal stalk of the 50S ribosomal subunit. Interacts with L10 and the large rRNA to form the base of the stalk. L10 forms an elongated spine to which L12 dimers bind in a sequential fashion forming a multimeric L10(L12)X complex. Post-translationally, one or more lysine residues are methylated.

In terms of biological role, forms part of the ribosomal stalk which helps the ribosome interact with GTP-bound translation factors. In Wolinella succinogenes (strain ATCC 29543 / DSM 1740 / CCUG 13145 / JCM 31913 / LMG 7466 / NCTC 11488 / FDC 602W) (Vibrio succinogenes), this protein is Large ribosomal subunit protein uL11.